We begin with the raw amino-acid sequence, 461 residues long: Epidermin leader peptide-processing serine protease EpiP (461 aa).

The N-terminal stretch at 1 to 23 is a signal peptide; it reads MNKFKFFIVFLILSLVFLQNEYA. The Peptidase S8 domain maps to 121–459; sequence QWDMRKITNE…NGKLDVYKLL (339 aa). Catalysis depends on charge relay system residues Asp149, His194, and Ser402.

Belongs to the peptidase S8 family.

It participates in antibiotic biosynthesis; epidermin biosynthesis. Its function is as follows. Protease which cleaves the matured lantibiotic from the modified prepeptide. The sequence is that of Epidermin leader peptide-processing serine protease EpiP (epiP) from Staphylococcus epidermidis.